The chain runs to 226 residues: MSSQTPVVTVDGPSGAGKGTLCMLLAKKLGFQLLDSGAIYRVLALAAIHHGVDTESEDALVPLATHLDVQFIAEGDLVKVILEGEDVSGELRKEETGMAASKVAALPRVREALLRRQRAFEAAPGLVADGRDMGTVVFPSAQAKIFLDASAEERANRRLKQLQDKGLDVRFADLLSEIQERDDRDRNRPVAPLRPAEDALVLDSTSMTIDEVVEKALQYIESKLAE.

An ATP-binding site is contributed by 12–20 (GPSGAGKGT).

The protein belongs to the cytidylate kinase family. Type 1 subfamily.

It is found in the cytoplasm. The enzyme catalyses CMP + ATP = CDP + ADP. It carries out the reaction dCMP + ATP = dCDP + ADP. This is Cytidylate kinase from Vibrio parahaemolyticus serotype O3:K6 (strain RIMD 2210633).